An 85-amino-acid chain; its full sequence is Large ribosomal subunit protein bL27 (85 aa).

The tract at residues 1–20 (MAHKKAGGSSRNGRDSEAKR) is disordered.

This sequence belongs to the bacterial ribosomal protein bL27 family.

The polypeptide is Large ribosomal subunit protein bL27 (Aeromonas salmonicida (strain A449)).